The primary structure comprises 467 residues: tRNA modification GTPase MnmE (467 aa).

Residues arginine 27, glutamate 89, and arginine 128 each contribute to the (6S)-5-formyl-5,6,7,8-tetrahydrofolate site. One can recognise a TrmE-type G domain in the interval 225–387 (GISMVIAGRP…LKQAIFTVVT (163 aa)). Asparagine 235 serves as a coordination point for K(+). GTP is bound by residues 235–240 (NVGKSS), 254–260 (TSIAGTT), 279–282 (DTAG), and 368–370 (SAR). Serine 239 is a binding site for Mg(2+). 3 residues coordinate K(+): threonine 254, isoleucine 256, and threonine 259. Mg(2+) is bound at residue threonine 260. A (6S)-5-formyl-5,6,7,8-tetrahydrofolate-binding site is contributed by lysine 467.

The protein belongs to the TRAFAC class TrmE-Era-EngA-EngB-Septin-like GTPase superfamily. TrmE GTPase family. In terms of assembly, homodimer. Heterotetramer of two MnmE and two MnmG subunits. K(+) is required as a cofactor.

It is found in the cytoplasm. Exhibits a very high intrinsic GTPase hydrolysis rate. Involved in the addition of a carboxymethylaminomethyl (cmnm) group at the wobble position (U34) of certain tRNAs, forming tRNA-cmnm(5)s(2)U34. This is tRNA modification GTPase MnmE from Desulfotalea psychrophila (strain LSv54 / DSM 12343).